Consider the following 263-residue polypeptide: Probable esterase PIR7A (263 aa).

The active-site Acyl-ester intermediate is S82. Residues D213 and H241 each act as charge relay system in the active site.

The protein belongs to the AB hydrolase superfamily.

This chain is Probable esterase PIR7A (PIR7A), found in Oryza sativa subsp. indica (Rice).